Consider the following 476-residue polypeptide: MRSEKEGAGGLRAAVAARGPSGREKLSALEVQFHRDSQQQEAETPPTSSSGCGGGAGKPREEKRTALSKVVIRRLPPGLTKEQLEEQLRPLPAHDYFEFFAADLSLYPHLYSRAYINFRNPDDILLFRDRFDGYIFLDSKGLEYPAVVEFAPFQKIAKKKLRKKDAKTGSIEDDPEYKKFLETYCVEEEKTSANPETLLGEMEAKTRELIARRTTPLLEYIKNRKLEKQRIREEKREERRRRELEKKRLREEEKRRRREEERCKKKETDKQKKIAEKEVRIKLLKKPEKGEEPTTEKPKERGEEIDTGGGKQESCAPGAVVKARPMEGSLEEPQETSHSGSDKEHRDVERSQEQESEAQRYHVDDGRRHRAHHEPERLSRRSEDEQRWGKGPGQDRGKKGSQDSGAPGEAMERLGRAQRCDDSPAPRKERLANKDRPALQLYDPGARFRARECGGNRRICKAEGSGTGPEKREEAE.

A disordered region spans residues 1 to 63 (MRSEKEGAGG…GGAGKPREEK (63 aa)). Basic and acidic residues predominate over residues 21–38 (SGREKLSALEVQFHRDSQ). The segment at 66-140 (ALSKVVIRRL…FDGYIFLDSK (75 aa)) is required for interaction with UPF2. 3 stretches are compositionally biased toward basic and acidic residues: residues 250-304 (REEE…RGEE), 340-401 (GSDK…KKGS), and 410-437 (AMER…KDRP). The disordered stretch occupies residues 250–476 (REEEKRRRRE…TGPEKREEAE (227 aa)). Serine 341 carries the phosphoserine modification. Residues 421 to 434 (DDSPAPRKERLANK) are required for association with EIF4A3 and ECJ core components CASC3, MAGOH and RBM8A.

This sequence belongs to the RENT3 family. As to quaternary structure, found in a post-splicing messenger ribonucleoprotein (mRNP) complex. Associates with the exon junction complex (EJC). Interacts with UPF2 and RBM8A. Interacts with DHX34; the interaction is RNA-independent. In terms of tissue distribution, isoform 1 is strongly expressed in testis, uterus, muscle, fetal brain and spinal cord. Isoform 2 is strongly expressed in fetal brain and spinal cord.

The protein localises to the nucleus. It localises to the cytoplasm. Involved in nonsense-mediated decay (NMD) of mRNAs containing premature stop codons by associating with the nuclear exon junction complex (EJC) and serving as link between the EJC core and NMD machinery. Recruits UPF2 at the cytoplasmic side of the nuclear envelope and the subsequent formation of an UPF1-UPF2-UPF3 surveillance complex (including UPF1 bound to release factors at the stalled ribosome) is believed to activate NMD. However, UPF3A is shown to be only marginally active in NMD as compared to UPF3B. Binds spliced mRNA upstream of exon-exon junctions. In vitro, weakly stimulates translation. This is Regulator of nonsense transcripts 3A (UPF3A) from Homo sapiens (Human).